The primary structure comprises 393 residues: Glutamate 5-kinase (393 aa).

Lys17 is a binding site for ATP. Substrate-binding residues include Ser57, Asp144, and Asn156. 176–177 (SD) is an ATP binding site. Residues 282–359 (AGSIAIDAGA…AEIAAILGYA (78 aa)) enclose the PUA domain. The tract at residues 374–393 (APSGARSEEGGNEKKGKLHA) is disordered. The span at 379 to 393 (RSEEGGNEKKGKLHA) shows a compositional bias: basic and acidic residues.

Belongs to the glutamate 5-kinase family.

The protein localises to the cytoplasm. The catalysed reaction is L-glutamate + ATP = L-glutamyl 5-phosphate + ADP. Its pathway is amino-acid biosynthesis; L-proline biosynthesis; L-glutamate 5-semialdehyde from L-glutamate: step 1/2. Catalyzes the transfer of a phosphate group to glutamate to form L-glutamate 5-phosphate. The polypeptide is Glutamate 5-kinase (Sinorhizobium fredii (strain NBRC 101917 / NGR234)).